Here is a 203-residue protein sequence, read N- to C-terminus: ATP-dependent Clp protease proteolytic subunit (203 aa).

The active-site Nucleophile is the serine 107. Histidine 132 is an active-site residue.

The protein belongs to the peptidase S14 family. As to quaternary structure, fourteen ClpP subunits assemble into 2 heptameric rings which stack back to back to give a disk-like structure with a central cavity, resembling the structure of eukaryotic proteasomes.

It is found in the cytoplasm. The enzyme catalyses Hydrolysis of proteins to small peptides in the presence of ATP and magnesium. alpha-casein is the usual test substrate. In the absence of ATP, only oligopeptides shorter than five residues are hydrolyzed (such as succinyl-Leu-Tyr-|-NHMec, and Leu-Tyr-Leu-|-Tyr-Trp, in which cleavage of the -Tyr-|-Leu- and -Tyr-|-Trp bonds also occurs).. Cleaves peptides in various proteins in a process that requires ATP hydrolysis. Has a chymotrypsin-like activity. Plays a major role in the degradation of misfolded proteins. The polypeptide is ATP-dependent Clp protease proteolytic subunit (Shewanella sediminis (strain HAW-EB3)).